The following is a 461-amino-acid chain: Chromosomal replication initiator protein DnaA (461 aa).

The tract at residues 1–84 is domain I, interacts with DnaA modulators; it reads MAVSLWQQCI…RFDIGSRPSA (84 aa). The segment at 84 to 124 is domain II; sequence AKKFEPAPVATVRAPNTQTKATVGTYFNTQAEPIANANHRS. A domain III, AAA+ region region spans residues 125-341; that stretch reads NINPTYQFDN…GALNRVIANA (217 aa). ATP-binding residues include glycine 169, glycine 171, lysine 172, and threonine 173. Positions 342 to 461 are domain IV, binds dsDNA; that stretch reads NFTGRPITID…YANLIRTLSS (120 aa).

Belongs to the DnaA family. Oligomerizes as a right-handed, spiral filament on DNA at oriC.

The protein localises to the cytoplasm. In terms of biological role, plays an essential role in the initiation and regulation of chromosomal replication. ATP-DnaA binds to the origin of replication (oriC) to initiate formation of the DNA replication initiation complex once per cell cycle. Binds the DnaA box (a 9 base pair repeat at the origin) and separates the double-stranded (ds)DNA. Forms a right-handed helical filament on oriC DNA; dsDNA binds to the exterior of the filament while single-stranded (ss)DNA is stabiized in the filament's interior. The ATP-DnaA-oriC complex binds and stabilizes one strand of the AT-rich DNA unwinding element (DUE), permitting loading of DNA polymerase. After initiation quickly degrades to an ADP-DnaA complex that is not apt for DNA replication. Binds acidic phospholipids. This chain is Chromosomal replication initiator protein DnaA, found in Shewanella putrefaciens (strain CN-32 / ATCC BAA-453).